A 70-amino-acid polypeptide reads, in one-letter code: Conotoxin AbVIC (70 aa).

Positions 1-17 (VLIIAVLFLTACQLTTA) are cleaved as a signal peptide. Residues 18-41 (ETSSRGKQKHRALRSTDKNSKLTR) constitute a propeptide that is removed on maturation. The interval 19–41 (TSSRGKQKHRALRSTDKNSKLTR) is disordered. 3 disulfide bridges follow: C43–C57, C50–C61, and C56–C68.

The protein belongs to the conotoxin O1 superfamily. In terms of tissue distribution, expressed by the venom duct.

The protein resides in the secreted. This is Conotoxin AbVIC from Conus abbreviatus (Abbreviated cone).